Consider the following 196-residue polypeptide: Endoribonuclease YbeY (196 aa).

3 residues coordinate Zn(2+): His-120, His-124, and His-130.

This sequence belongs to the endoribonuclease YbeY family. Requires Zn(2+) as cofactor.

The protein localises to the cytoplasm. In terms of biological role, single strand-specific metallo-endoribonuclease involved in late-stage 70S ribosome quality control and in maturation of the 3' terminus of the 16S rRNA. In Corynebacterium glutamicum (strain ATCC 13032 / DSM 20300 / JCM 1318 / BCRC 11384 / CCUG 27702 / LMG 3730 / NBRC 12168 / NCIMB 10025 / NRRL B-2784 / 534), this protein is Endoribonuclease YbeY.